We begin with the raw amino-acid sequence, 863 residues long: Paramyosin (863 aa).

Positions 1–18 (MSESHVKISRTIIRGTSP) are nonhelical region. The stretch at 19 to 836 (STVRLESRVR…ERTITIKRTI (818 aa)) forms a coiled coil. The segment at 837–863 (GGPGSRAVSVVREINSVSRGNRATSIM) is nonhelical region.

The protein belongs to the paramyosin family. In terms of assembly, homodimer or monomer in secreted form.

The protein localises to the cytoplasm. The protein resides in the myofibril. Its subcellular location is the secreted. In terms of biological role, paramyosin is a major structural component of many thick filaments isolated from invertebrate muscles. It is a prominent antigen in human cysticercosis, may have a role as a modulator of the host immune response. It is able to bind collagen and has complement inhibitor activity. This is Paramyosin (PMY) from Taenia solium (Pork tapeworm).